Consider the following 431-residue polypeptide: Mevalonate kinase (431 aa).

Residues lysine 13, serine 139, and 144–150 (GAGLGSS) contribute to the ATP site. 2 residues coordinate Mg(2+): serine 150 and glutamate 198. Aspartate 209 acts as the Proton acceptor in catalysis.

The protein belongs to the GHMP kinase family. Mevalonate kinase subfamily. As to quaternary structure, homodimer.

Its subcellular location is the cytoplasm. It is found in the cytosol. It carries out the reaction (R)-mevalonate + ATP = (R)-5-phosphomevalonate + ADP + H(+). The protein operates within isoprenoid biosynthesis; isopentenyl diphosphate biosynthesis via mevalonate pathway; isopentenyl diphosphate from (R)-mevalonate: step 1/3. Functionally, mevalonate kinase; part of the second module of ergosterol biosynthesis pathway that includes the middle steps of the pathway. ERG12 converts mevalonate into 5-phosphomevalonate. The second module is carried out in the vacuole and involves the formation of farnesyl diphosphate, which is also an important intermediate in the biosynthesis of ubiquinone, dolichol, heme and prenylated proteins. Activity by the mevalonate kinase ERG12 first converts mevalonate into 5-phosphomevalonate. 5-phosphomevalonate is then further converted to 5-diphosphomevalonate by the phosphomevalonate kinase ERG8. The diphosphomevalonate decarboxylase MVD then produces isopentenyl diphosphate. The isopentenyl-diphosphate delta-isomerase IDI1 then catalyzes the 1,3-allylic rearrangement of the homoallylic substrate isopentenyl (IPP) to its highly electrophilic allylic isomer, dimethylallyl diphosphate (DMAPP). Finally the farnesyl diphosphate synthase ERG20 catalyzes the sequential condensation of isopentenyl pyrophosphate with dimethylallyl pyrophosphate, and then with the resultant geranylpyrophosphate to the ultimate product farnesyl pyrophosphate. In Candida albicans (strain SC5314 / ATCC MYA-2876) (Yeast), this protein is Mevalonate kinase.